The sequence spans 568 residues: Sulfate adenylyltransferase (568 aa).

Residues 1–162 form an N-terminal region; the sequence is MANSPHGGVL…IEAVNKLNHY (162 aa). The interval 163–388 is catalytic; sequence DYVALRYSPA…LRESSPPRAT (226 aa). Residue Gln-190 participates in sulfate binding. ATP is bound by residues 190–193 and 284–287; these read QTRN and GRDH. Catalysis depends on residues Thr-191, Arg-192, and Asn-193. Position 192 (Arg-192) interacts with sulfate. Ala-288 contributes to the sulfate binding site. Residue Val-326 participates in ATP binding. The interval 389–568 is allosteric regulation domain; adenylyl-sulfate kinase-like; the sequence is QGFTIFLTGY…LESEGYFDRL (180 aa). 3'-phosphoadenylyl sulfate-binding positions include 428-431, Arg-445, 471-472, and Arg-510; these read DTVR and IA.

It in the N-terminal section; belongs to the sulfate adenylyltransferase family. This sequence in the C-terminal section; belongs to the APS kinase family. Homohexamer. Dimer of trimers.

The protein resides in the cytoplasm. It catalyses the reaction sulfate + ATP + H(+) = adenosine 5'-phosphosulfate + diphosphate. The protein operates within sulfur metabolism; hydrogen sulfide biosynthesis; sulfite from sulfate: step 1/3. With respect to regulation, allosterically inhibited by 3'-phosphoadenosine 5'-phosphosulfate (PAPS). Its function is as follows. Catalyzes the first intracellular reaction of sulfate assimilation, forming adenosine-5'-phosphosulfate (APS) from inorganic sulfate and ATP. Plays an important role in sulfate activation as a component of the biosynthesis pathway of sulfur-containing amino acids. This chain is Sulfate adenylyltransferase, found in Aspergillus terreus.